The following is a 166-amino-acid chain: Small ribosomal subunit protein uS5 (166 aa).

The 64-residue stretch at 11 to 74 (LNEKLIAVNR…EKARRNMFTI (64 aa)) folds into the S5 DRBM domain.

This sequence belongs to the universal ribosomal protein uS5 family. Part of the 30S ribosomal subunit. Contacts proteins S4 and S8.

In terms of biological role, with S4 and S12 plays an important role in translational accuracy. Its function is as follows. Located at the back of the 30S subunit body where it stabilizes the conformation of the head with respect to the body. The polypeptide is Small ribosomal subunit protein uS5 (Aliivibrio fischeri (strain ATCC 700601 / ES114) (Vibrio fischeri)).